A 238-amino-acid chain; its full sequence is Probable transcriptional regulatory protein SGO_0454 (238 aa).

The protein belongs to the TACO1 family. YeeN subfamily.

Its subcellular location is the cytoplasm. In Streptococcus gordonii (strain Challis / ATCC 35105 / BCRC 15272 / CH1 / DL1 / V288), this protein is Probable transcriptional regulatory protein SGO_0454.